Here is a 306-residue protein sequence, read N- to C-terminus: Transcription initiation factor IIB 2 (306 aa).

The TFIIB-type zinc-finger motif lies at P6–E37. Zn(2+) contacts are provided by C10, C13, C29, and C32. 2 tandem repeats follow at residues S123–L206 and E217–E298.

Belongs to the TFIIB family.

Its function is as follows. Stabilizes TBP binding to an archaeal box-A promoter. Also responsible for recruiting RNA polymerase II to the pre-initiation complex (DNA-TBP-TFIIB). This chain is Transcription initiation factor IIB 2, found in Thermococcus kodakarensis (strain ATCC BAA-918 / JCM 12380 / KOD1) (Pyrococcus kodakaraensis (strain KOD1)).